Here is a 433-residue protein sequence, read N- to C-terminus: FAD-dependent monooxygenase notI (433 aa).

2 residues coordinate FAD: E45 and R117. Residue R195 is part of the active site. D314 and A327 together coordinate FAD.

Belongs to the paxM FAD-dependent monooxygenase family. It depends on FAD as a cofactor.

It participates in alkaloid biosynthesis. In terms of biological role, FAD-dependent monooxygenase; part of the gene cluster that mediates the biosynthesis of notoamide, a fungal indole alkaloid that belongs to a family of natural products containing a characteristic bicyclo[2.2.2]diazaoctane core. The first step of notoamide biosynthesis involves coupling of L-proline and L-tryptophan by the bimodular NRPS notE, to produce cyclo-L-tryptophan-L-proline called brevianamide F. The reverse prenyltransferase notF then acts as a deoxybrevianamide E synthase and converts brevianamide F to deoxybrevianamide E via reverse prenylation at C-2 of the indole ring leading to the bicyclo[2.2.2]diazaoctane core. Deoxybrevianamide E is further hydroxylated at C-6 of the indole ring, likely catalyzed by the cytochrome P450 monooxygenase notG, to yield 6-hydroxy-deoxybrevianamide E. 6-hydroxy-deoxybrevianamide E is a specific substrate of the prenyltransferase notC for normal prenylation at C-7 to produce 6-hydroxy-7-prenyl-deoxybrevianamide, also called notoamide S. As the proposed pivotal branching point in notoamide biosynthesis, notoamide S can be diverted to notoamide E through an oxidative pyran ring closure putatively catalyzed by either notH cytochrome P450 monooxygenase or the notD FAD-linked oxidoreductase. This step would be followed by an indole 2,3-epoxidation-initiated pinacol-like rearrangement catalyzed by the notB FAD-dependent monooxygenase leading to the formation of notoamide C and notoamide D. On the other hand notoamide S is converted to notoamide T by notH (or notD), a bifunctional oxidase that also functions as the intramolecular Diels-Alderase responsible for generation of (+)-notoamide T. To generate antipodal (-)-notoaminide T, notH' (or notD') in Aspergillus versicolor is expected to catalyze a Diels-Alder reaction leading to the opposite stereochemistry. The remaining oxidoreductase notD (or notH) likely catalyzes the oxidative pyran ring formation to yield (+)-stephacidin A. The FAD-dependent monooxygenase notI is highly similar to notB and is predicted to catalyze a similar conversion from (+)-stephacidin A to (-)-notoamide B via the 2,3-epoxidation of (+)-stephacidin A followed by a pinacol-type rearrangement. Finally, it remains unclear which enzyme could be responsible for the final hydroxylation steps leading to notoamide A and sclerotiamide. The sequence is that of FAD-dependent monooxygenase notI from Aspergillus sp. (strain MF297-2).